Consider the following 154-residue polypeptide: Nucleoside diphosphate kinase (154 aa).

Lys12, Phe60, Arg88, Thr94, Arg105, and Asn115 together coordinate ATP. The active-site Pros-phosphohistidine intermediate is the His118.

The protein belongs to the NDK family. It depends on Mg(2+) as a cofactor.

It is found in the cytoplasm. It catalyses the reaction a 2'-deoxyribonucleoside 5'-diphosphate + ATP = a 2'-deoxyribonucleoside 5'-triphosphate + ADP. It carries out the reaction a ribonucleoside 5'-diphosphate + ATP = a ribonucleoside 5'-triphosphate + ADP. Major role in the synthesis of nucleoside triphosphates other than ATP. The ATP gamma phosphate is transferred to the NDP beta phosphate via a ping-pong mechanism, using a phosphorylated active-site intermediate. The protein is Nucleoside diphosphate kinase of Haloarcula marismortui (strain ATCC 43049 / DSM 3752 / JCM 8966 / VKM B-1809) (Halobacterium marismortui).